A 246-amino-acid chain; its full sequence is Biosynthetic peptidoglycan transglycosylase (246 aa).

Residues 20–42 form a helical membrane-spanning segment; that stretch reads SLRWVLAAPLLFAAASVLQVLAL.

This sequence belongs to the glycosyltransferase 51 family.

The protein localises to the cell inner membrane. It catalyses the reaction [GlcNAc-(1-&gt;4)-Mur2Ac(oyl-L-Ala-gamma-D-Glu-L-Lys-D-Ala-D-Ala)](n)-di-trans,octa-cis-undecaprenyl diphosphate + beta-D-GlcNAc-(1-&gt;4)-Mur2Ac(oyl-L-Ala-gamma-D-Glu-L-Lys-D-Ala-D-Ala)-di-trans,octa-cis-undecaprenyl diphosphate = [GlcNAc-(1-&gt;4)-Mur2Ac(oyl-L-Ala-gamma-D-Glu-L-Lys-D-Ala-D-Ala)](n+1)-di-trans,octa-cis-undecaprenyl diphosphate + di-trans,octa-cis-undecaprenyl diphosphate + H(+). It functions in the pathway cell wall biogenesis; peptidoglycan biosynthesis. Peptidoglycan polymerase that catalyzes glycan chain elongation from lipid-linked precursors. The protein is Biosynthetic peptidoglycan transglycosylase of Xanthomonas campestris pv. campestris (strain 8004).